We begin with the raw amino-acid sequence, 706 residues long: Glycylpeptide N-tetradecanoyltransferase (706 aa).

A disordered region spans residues 1-119; the sequence is MSGIAGTSQD…LASGSSREGK (119 aa). The span at 7–42 shows a compositional bias: low complexity; sequence TSQDTSVAASASSSSTRPAAASSSIAPPSPSLTTAP. Residues 47–65 are compositionally biased toward acidic residues; it reads EQDDDDDQENDDEEEEEEG. The segment covering 78-95 has biased composition (basic residues); that stretch reads KQRKKKKSKAAAKLRKKL. Tetradecanoyl-CoA-binding positions include 180–183, 317–319, and 325–329; these read HKFW, LCV, and SKRLA. Residue V706 is the Proton acceptor; via carboxylate of the active site.

This sequence belongs to the NMT family. In terms of assembly, monomer.

It localises to the cytoplasm. The enzyme catalyses N-terminal glycyl-[protein] + tetradecanoyl-CoA = N-tetradecanoylglycyl-[protein] + CoA + H(+). In terms of biological role, adds a myristoyl group to the N-terminal glycine residue of certain cellular proteins. The chain is Glycylpeptide N-tetradecanoyltransferase (NMT1) from Mycosarcoma maydis (Corn smut fungus).